The chain runs to 104 residues: Protein P3 (104 aa).

A helical transmembrane segment spans residues 77 to 99; the sequence is LVFGVPQKTLLLGFGGLLVLGLV.

As to quaternary structure, homodimer.

It localises to the virion membrane. The sequence is that of Protein P3 (III) from Pseudoalteromonas phage PM2 (Bacteriophage PM2).